We begin with the raw amino-acid sequence, 61 residues long: Toxin S5C1 (61 aa).

Disulfide bonds link C3/C22, C16/C39, C41/C53, and C54/C59. A Cell attachment site motif is present at residues 45-47 (RGD).

This sequence belongs to the three-finger toxin family. Short-chain subfamily. Antiplatelet toxin sub-subfamily. Expressed by the venom gland.

The protein localises to the secreted. Its function is as follows. Inhibits ADP-induced platelet aggregation and inhibits the binding of purified platelet fibrinogen receptor alpha-IIb/beta-3 (ITGA2B/ITGB3) to immobilized fibrinogen. The sequence is that of Toxin S5C1 from Dendroaspis jamesoni kaimosae (Eastern Jameson's mamba).